The following is a 100-amino-acid chain: Phosphoribosylformylglycinamidine synthase subunit PurS (100 aa).

The protein belongs to the PurS family. As to quaternary structure, homodimer. Part of the FGAM synthase complex composed of 1 PurL, 1 PurQ and 2 PurS subunits.

It localises to the cytoplasm. The enzyme catalyses N(2)-formyl-N(1)-(5-phospho-beta-D-ribosyl)glycinamide + L-glutamine + ATP + H2O = 2-formamido-N(1)-(5-O-phospho-beta-D-ribosyl)acetamidine + L-glutamate + ADP + phosphate + H(+). The protein operates within purine metabolism; IMP biosynthesis via de novo pathway; 5-amino-1-(5-phospho-D-ribosyl)imidazole from N(2)-formyl-N(1)-(5-phospho-D-ribosyl)glycinamide: step 1/2. Part of the phosphoribosylformylglycinamidine synthase complex involved in the purines biosynthetic pathway. Catalyzes the ATP-dependent conversion of formylglycinamide ribonucleotide (FGAR) and glutamine to yield formylglycinamidine ribonucleotide (FGAM) and glutamate. The FGAM synthase complex is composed of three subunits. PurQ produces an ammonia molecule by converting glutamine to glutamate. PurL transfers the ammonia molecule to FGAR to form FGAM in an ATP-dependent manner. PurS interacts with PurQ and PurL and is thought to assist in the transfer of the ammonia molecule from PurQ to PurL. This Synechocystis sp. (strain ATCC 27184 / PCC 6803 / Kazusa) protein is Phosphoribosylformylglycinamidine synthase subunit PurS.